Here is a 240-residue protein sequence, read N- to C-terminus: Biosynthetic peptidoglycan transglycosylase (240 aa).

The chain crosses the membrane as a helical span at residues A12–P31.

Belongs to the glycosyltransferase 51 family.

It is found in the cell inner membrane. The enzyme catalyses [GlcNAc-(1-&gt;4)-Mur2Ac(oyl-L-Ala-gamma-D-Glu-L-Lys-D-Ala-D-Ala)](n)-di-trans,octa-cis-undecaprenyl diphosphate + beta-D-GlcNAc-(1-&gt;4)-Mur2Ac(oyl-L-Ala-gamma-D-Glu-L-Lys-D-Ala-D-Ala)-di-trans,octa-cis-undecaprenyl diphosphate = [GlcNAc-(1-&gt;4)-Mur2Ac(oyl-L-Ala-gamma-D-Glu-L-Lys-D-Ala-D-Ala)](n+1)-di-trans,octa-cis-undecaprenyl diphosphate + di-trans,octa-cis-undecaprenyl diphosphate + H(+). Its pathway is cell wall biogenesis; peptidoglycan biosynthesis. Peptidoglycan polymerase that catalyzes glycan chain elongation from lipid-linked precursors. The polypeptide is Biosynthetic peptidoglycan transglycosylase (Pseudomonas fluorescens (strain ATCC BAA-477 / NRRL B-23932 / Pf-5)).